Reading from the N-terminus, the 354-residue chain is Chorismate synthase (354 aa).

2 residues coordinate NADP(+): Arg-48 and Arg-54. FMN contacts are provided by residues 125–127, 238–239, Gly-278, 293–297, and Arg-319; these read RSS, NA, and KPTSS.

Belongs to the chorismate synthase family. In terms of assembly, homotetramer. Requires FMNH2 as cofactor.

The enzyme catalyses 5-O-(1-carboxyvinyl)-3-phosphoshikimate = chorismate + phosphate. The protein operates within metabolic intermediate biosynthesis; chorismate biosynthesis; chorismate from D-erythrose 4-phosphate and phosphoenolpyruvate: step 7/7. Its function is as follows. Catalyzes the anti-1,4-elimination of the C-3 phosphate and the C-6 proR hydrogen from 5-enolpyruvylshikimate-3-phosphate (EPSP) to yield chorismate, which is the branch point compound that serves as the starting substrate for the three terminal pathways of aromatic amino acid biosynthesis. This reaction introduces a second double bond into the aromatic ring system. This Blochmanniella pennsylvanica (strain BPEN) protein is Chorismate synthase.